A 78-amino-acid polypeptide reads, in one-letter code: Translational regulator CsrA (78 aa).

This sequence belongs to the CsrA/RsmA family. As to quaternary structure, homodimer; the beta-strands of each monomer intercalate to form a hydrophobic core, while the alpha-helices form wings that extend away from the core.

It is found in the cytoplasm. Functionally, a translational regulator that binds mRNA to regulate translation initiation and/or mRNA stability. Usually binds in the 5'-UTR at or near the Shine-Dalgarno sequence preventing ribosome-binding, thus repressing translation. Its main target seems to be the major flagellin gene, while its function is anatagonized by FliW. The sequence is that of Translational regulator CsrA from Oleidesulfovibrio alaskensis (strain ATCC BAA-1058 / DSM 17464 / G20) (Desulfovibrio alaskensis).